We begin with the raw amino-acid sequence, 946 residues long: Bifunctional glutamine synthetase adenylyltransferase/adenylyl-removing enzyme (946 aa).

The tract at residues 1–440 is adenylyl removase; that stretch reads MKPLSSPLQQ…VFNELIGDDE (440 aa). Residues 449 to 946 form an adenylyl transferase region; it reads SEQWRELWQD…ASWQKWLVEE (498 aa).

Belongs to the GlnE family. Requires Mg(2+) as cofactor.

The enzyme catalyses [glutamine synthetase]-O(4)-(5'-adenylyl)-L-tyrosine + phosphate = [glutamine synthetase]-L-tyrosine + ADP. The catalysed reaction is [glutamine synthetase]-L-tyrosine + ATP = [glutamine synthetase]-O(4)-(5'-adenylyl)-L-tyrosine + diphosphate. In terms of biological role, involved in the regulation of glutamine synthetase GlnA, a key enzyme in the process to assimilate ammonia. When cellular nitrogen levels are high, the C-terminal adenylyl transferase (AT) inactivates GlnA by covalent transfer of an adenylyl group from ATP to specific tyrosine residue of GlnA, thus reducing its activity. Conversely, when nitrogen levels are low, the N-terminal adenylyl removase (AR) activates GlnA by removing the adenylyl group by phosphorolysis, increasing its activity. The regulatory region of GlnE binds the signal transduction protein PII (GlnB) which indicates the nitrogen status of the cell. The protein is Bifunctional glutamine synthetase adenylyltransferase/adenylyl-removing enzyme of Escherichia coli O6:H1 (strain CFT073 / ATCC 700928 / UPEC).